The primary structure comprises 439 residues: Xylose isomerase (439 aa).

Catalysis depends on residues His-98 and Asp-101. Glu-229, Glu-265, His-268, Asp-293, Asp-304, Asp-306, and Asp-335 together coordinate Mg(2+).

The protein belongs to the xylose isomerase family. Homotetramer. Mg(2+) serves as cofactor.

The protein localises to the cytoplasm. It catalyses the reaction alpha-D-xylose = alpha-D-xylulofuranose. Involved in D-xylose catabolism. This chain is Xylose isomerase (xylA), found in Staphylococcus xylosus.